Here is a 428-residue protein sequence, read N- to C-terminus: MSAKWEKLEGNQGVLTVEVDAEKVNEGLDEAFKKVVKKVQIPGFRKGKIPRSLFEKRFGVESLYADALDILLPEAYAKAVEETGIEPVDRPEIDVEQMEKGKSLIFTAKVTVKPEVTLGEYKGLEVEKLDDTVTDEDVEQELKRLQERHAELVVKEEGTVENGDTVVIDFEGFVDGEAFEGGKAENYSLVIGSGTFIPGFEEQLIGMAAGEEKDIEVTFPEEYHAEQLAGKPAVFKIKLHEIKTKQLPALDDEFAKDVDEEVETLDALKEKIKERLTKEKKEEAEAALRDAVVQKATENAQMDIPEVMVKNETDRMIREFEQRLQMQGLNLDLYYQFSGQDEAALREQMKEEAEKRVRVTLTLEAIVKAENIDVTEEEVEKELQEMASLYNLSVDKLKELLGTLDGLKEDLKMRKAIDFLVENSKVVA.

A PPIase FKBP-type domain is found at 163–248; that stretch reads GDTVVIDFEG…LHEIKTKQLP (86 aa).

The protein belongs to the FKBP-type PPIase family. Tig subfamily.

It is found in the cytoplasm. The enzyme catalyses [protein]-peptidylproline (omega=180) = [protein]-peptidylproline (omega=0). Functionally, involved in protein export. Acts as a chaperone by maintaining the newly synthesized protein in an open conformation. Functions as a peptidyl-prolyl cis-trans isomerase. This chain is Trigger factor, found in Anoxybacillus flavithermus (strain DSM 21510 / WK1).